Here is a 329-residue protein sequence, read N- to C-terminus: GTP 3',8-cyclase 1 (329 aa).

A Radical SAM core domain is found at 7–230 (GQGRQIDYLR…LDSAEQSGGP (224 aa)). Arg-16 serves as a coordination point for GTP. Residues Cys-23 and Cys-27 each coordinate [4Fe-4S] cluster. Tyr-29 is an S-adenosyl-L-methionine binding site. Cys-30 contacts [4Fe-4S] cluster. Position 65 (Arg-65) interacts with GTP. Gly-69 serves as a coordination point for S-adenosyl-L-methionine. Thr-96 is a binding site for GTP. Position 120 (Ser-120) interacts with S-adenosyl-L-methionine. Position 157 (Lys-157) interacts with GTP. Position 191 (Met-191) interacts with S-adenosyl-L-methionine. 2 residues coordinate [4Fe-4S] cluster: Cys-255 and Cys-258. GTP is bound at residue 260–262 (RLR). Residue Cys-272 participates in [4Fe-4S] cluster binding.

It belongs to the radical SAM superfamily. MoaA family. In terms of assembly, monomer and homodimer. [4Fe-4S] cluster serves as cofactor.

The catalysed reaction is GTP + AH2 + S-adenosyl-L-methionine = (8S)-3',8-cyclo-7,8-dihydroguanosine 5'-triphosphate + 5'-deoxyadenosine + L-methionine + A + H(+). The protein operates within cofactor biosynthesis; molybdopterin biosynthesis. Its function is as follows. Catalyzes the cyclization of GTP to (8S)-3',8-cyclo-7,8-dihydroguanosine 5'-triphosphate. This Pseudomonas aeruginosa (strain ATCC 15692 / DSM 22644 / CIP 104116 / JCM 14847 / LMG 12228 / 1C / PRS 101 / PAO1) protein is GTP 3',8-cyclase 1 (moaA1).